Here is a 412-residue protein sequence, read N- to C-terminus: Argininosuccinate synthase (412 aa).

ATP is bound by residues 15-23 and A42; that span reads AYSGGLDTS. The L-citrulline site is built by Y93 and S98. Position 123 (G123) interacts with ATP. Positions 125, 129, and 130 each coordinate L-aspartate. Residue N129 participates in L-citrulline binding. The L-citrulline site is built by R133, S185, S194, E270, and Y282.

The protein belongs to the argininosuccinate synthase family. Type 1 subfamily. Homotetramer.

It localises to the cytoplasm. It carries out the reaction L-citrulline + L-aspartate + ATP = 2-(N(omega)-L-arginino)succinate + AMP + diphosphate + H(+). It functions in the pathway amino-acid biosynthesis; L-arginine biosynthesis; L-arginine from L-ornithine and carbamoyl phosphate: step 2/3. This Psychrobacter cryohalolentis (strain ATCC BAA-1226 / DSM 17306 / VKM B-2378 / K5) protein is Argininosuccinate synthase.